Consider the following 430-residue polypeptide: Serine hydroxymethyltransferase (430 aa).

Residues leucine 123 and 127 to 129 contribute to the (6S)-5,6,7,8-tetrahydrofolate site; that span reads GHL. At lysine 232 the chain carries N6-(pyridoxal phosphate)lysine. Residue glutamate 248 coordinates (6S)-5,6,7,8-tetrahydrofolate.

The protein belongs to the SHMT family. In terms of assembly, homodimer. Requires pyridoxal 5'-phosphate as cofactor.

It is found in the cytoplasm. It carries out the reaction (6R)-5,10-methylene-5,6,7,8-tetrahydrofolate + glycine + H2O = (6S)-5,6,7,8-tetrahydrofolate + L-serine. The protein operates within one-carbon metabolism; tetrahydrofolate interconversion. It functions in the pathway amino-acid biosynthesis; glycine biosynthesis; glycine from L-serine: step 1/1. In terms of biological role, catalyzes the reversible interconversion of serine and glycine with tetrahydrofolate (THF) serving as the one-carbon carrier. This reaction serves as the major source of one-carbon groups required for the biosynthesis of purines, thymidylate, methionine, and other important biomolecules. Also exhibits THF-independent aldolase activity toward beta-hydroxyamino acids, producing glycine and aldehydes, via a retro-aldol mechanism. The sequence is that of Serine hydroxymethyltransferase from Anaplasma marginale (strain St. Maries).